The chain runs to 502 residues: MEVEGKGGEAGTTTTTAPRRFALPVDAENKATTFRLFSVAKPHMRAFHLSWFQFFCCFVSTFAAPPLLPVIRENLNLTATDIGNAGIASVSGAVFARIVMGTACDLFGPRLASAALTLSTAPAVYFTAGIKSPIGFIMVRFFAGFSLATFVSTQFWMSSMFSGPVVGSANGIAAGWGNLGGGATQLIMPIVFSLIRNMGATKFTAWRIAFFIPGLFQTLSAFAVLLFGQDLPDGDYWAMHKSGEREKDDVGKVISNGIKNYRGWITALAYGYCFGVELTIDNIIAEYFFDRFHLKLQTAGIIAASFGLANFFARPGGGIFSDFMSRRFGMRGRLWAWWIVQTSGGVLCACLGQISSLTVSIIVMLVFSVFVQAACGLTFGVVPFISRRSLGVVSGMTGAGGNVGAVLTQLIFFKGSTYTRETGITLMGVMSIACSLPICLIYFPQWGGMFCGPSSKKVTEEDYYLAEWNDEEKEKNLHIGSQKFAETSISERGRATTTHPQT.

The next 12 helical transmembrane spans lie at 51-71 (WFQF…LPVI), 87-107 (IASV…CDLF), 111-131 (LASA…AGIK), 133-153 (PIGF…FVST), 172-192 (IAAG…PIVF), 208-228 (IAFF…LLFG), 264-284 (WITA…DNII), 300-320 (GIIA…GGIF), 334-354 (LWAW…LGQI), 361-381 (IIVM…TFGV), 393-413 (VSGM…LIFF), and 423-443 (GITL…LIYF). The tract at residues 477–502 (LHIGSQKFAETSISERGRATTTHPQT) is disordered.

The protein belongs to the major facilitator superfamily. Nitrate/nitrite porter (TC 2.A.1.8) family. Oligomeric molecular complex with NRT3.1. As to expression, expressed in roots, shoots and seeds. Expressed in leaves. Expressed in root hair zone of the primary root and the lateral roots, but not in the lateral root tip or in older parts of the roots. Detected mainly in the epidermis and the cortex. Expressed in shoots only in higher-order veins.

The protein resides in the cell membrane. In terms of biological role, nitrate transporter involved in the constitutive high-affinity transport system (cHATS) under long-term N starvation conditions. Predominantly expressed in roots of nitrate-deprived plants as a 150 kDa molecular complex with NRT3.1 representing the major contributor to cHATS influx. The principal role of this cHATS is to enable roots previously deprived of nitrate to absorb this ion and initiate induction of nitrate-inducible genes. Not involved in transfer of nitrate from roots to shoots. Contributes to phloem loading of nitrate in shoots during N starvation, but not required for growth and nitrate uptake in young plants. Required for the nitrate uptake-independent plant growth promotion and lateral root response to the rhizospheric Phyllobacterium. Might be involved in the transfer of nitrate from stored pools to cytoplasm. The sequence is that of High affinity nitrate transporter 2.5 (NRT2.5) from Arabidopsis thaliana (Mouse-ear cress).